The sequence spans 287 residues: Nucleotide-binding protein Hhal_2130 (287 aa).

Position 11 to 18 (11 to 18) interacts with ATP; it reads GLSGSGKS. 63 to 66 is a binding site for GTP; it reads DARN.

This sequence belongs to the RapZ-like family.

In terms of biological role, displays ATPase and GTPase activities. This is Nucleotide-binding protein Hhal_2130 from Halorhodospira halophila (strain DSM 244 / SL1) (Ectothiorhodospira halophila (strain DSM 244 / SL1)).